We begin with the raw amino-acid sequence, 486 residues long: MFSPMALRPRCAKWLIVTGLFLMLGACVEKPSTLERVKEDGVLRVVTRNSPATYFQDRNGETGFEYELVKRFADDLGVELKIETADNLDDLFDQLGQPKGPVLAAAGLVSSEQRKQQVRFSHPYLEVTPQVIYRNGRSRPTTAQDLVGKHIMVLKGSTHAEQLAELKLKYPGIEYEESDAVEVVDLLRMVDEGQIDLTLVDSNELAMNQVYFPNVRVAFDLGDARSQSWAVAAGDDNSLLNEINSFLDKVEKNGTLQRLKDRYYGHVDVLGYVGAYTFAQHLQQRLPKYEKHFKASAKQEKLDWRLLAAVGYQESMWQAEVTSKTGVRGLMMLTQNTAQAMGVSNRLDPKQSISGGAKYLAYIKEQLDDKIEEPDRTWFALAAYNVGTGHLDDARKLAEKEGLNPNKWLDVKKMLPRLSQKQWYSKTRYGYARGGEPVHFVANIRRYYDILTWVTQPQLEGDQVAEGNLHVPGVNKTKPPEENPPL.

The N-terminal stretch at 1 to 26 (MFSPMALRPRCAKWLIVTGLFLMLGA) is a signal peptide. The interval 27 to 267 (CVEKPSTLER…RLKDRYYGHV (241 aa)) is non-LT domain. Positions 268–486 (DVLGYVGAYT…TKPPEENPPL (219 aa)) are LT domain. Glu-314 is a catalytic residue. The disordered stretch occupies residues 464 to 486 (VAEGNLHVPGVNKTKPPEENPPL).

The protein in the N-terminal section; belongs to the bacterial solute-binding protein 3 family. This sequence in the C-terminal section; belongs to the transglycosylase Slt family.

The protein resides in the cell outer membrane. It catalyses the reaction Exolytic cleavage of the (1-&gt;4)-beta-glycosidic linkage between N-acetylmuramic acid (MurNAc) and N-acetylglucosamine (GlcNAc) residues in peptidoglycan, from either the reducing or the non-reducing ends of the peptidoglycan chains, with concomitant formation of a 1,6-anhydrobond in the MurNAc residue.. Murein-degrading enzyme that degrades murein glycan strands and insoluble, high-molecular weight murein sacculi, with the concomitant formation of a 1,6-anhydromuramoyl product. Lytic transglycosylases (LTs) play an integral role in the metabolism of the peptidoglycan (PG) sacculus. Their lytic action creates space within the PG sacculus to allow for its expansion as well as for the insertion of various structures such as secretion systems and flagella. This chain is Membrane-bound lytic murein transglycosylase F, found in Pseudomonas fluorescens (strain ATCC BAA-477 / NRRL B-23932 / Pf-5).